Here is a 103-residue protein sequence, read N- to C-terminus: Large ribosomal subunit protein bL21 (103 aa).

Belongs to the bacterial ribosomal protein bL21 family. As to quaternary structure, part of the 50S ribosomal subunit. Contacts protein L20.

Its function is as follows. This protein binds to 23S rRNA in the presence of protein L20. The protein is Large ribosomal subunit protein bL21 of Rhodococcus erythropolis (strain PR4 / NBRC 100887).